A 746-amino-acid chain; its full sequence is Taurocyamine kinase (746 aa).

2 Approximate repeats span residues 31–393 (MQVE…PEGV) and 394–705 (MPVE…YGEH). Positions 35-116 (SLQNLQAKIR…FDAVIADYHK (82 aa)) constitute a Phosphagen kinase N-terminal 1 domain. The region spanning 146–382 (LVVSTRVRLG…RALLELEVML (237 aa)) is the Phosphagen kinase C-terminal 1 domain. ATP contacts are provided by residues 149–153 (STRVR), His212, and Arg256. Cys298 is a catalytic residue. ATP contacts are provided by residues 307 to 311 (RASVH) and 335 to 340 (RGTHGE). Residues 398–479 (PLTYLAKLLE…LDPLICDYHG (82 aa)) form the Phosphagen kinase N-terminal 2 domain. The 238-residue stretch at 509 to 746 (FIVSTRVRVG…AKMIEIEKGL (238 aa)) folds into the Phosphagen kinase C-terminal 2 domain. ATP contacts are provided by residues 512–516 (STRVR), His575, and Arg619. Cys661 is an active-site residue. ATP-binding positions include 670 to 674 (RASVL) and 699 to 704 (RGLYGE).

The protein belongs to the ATP:guanido phosphotransferase family. The cofactor is Mg(2+).

It catalyses the reaction taurocyamine + ATP = N-phosphotaurocyamine + ADP + H(+). This family of enzymes reversibly catalyzes the transfer of phosphate between ATP and various phosphogens (e.g. creatine phosphate). This chain is Taurocyamine kinase, found in Schistosoma mansoni (Blood fluke).